The following is a 244-amino-acid chain: Vesicle-associated membrane protein-associated protein SCS2 (244 aa).

An N-acetylserine modification is found at S2. Topologically, residues 2-222 are cytoplasmic; the sequence is SAVEISPDVL…EAATVPAENE (221 aa). One can recognise an MSP domain in the interval 3–126; sequence AVEISPDVLV…ISKKIKVKYL (124 aa). Phosphoserine is present on S106. The segment at 135-219 is disordered; the sequence is QNQNIQENKE…QIKEAATVPA (85 aa). A compositionally biased stretch (basic and acidic residues) spans 153-168; that stretch reads SEPKEVPAVVNEKEVP. Residues 199-211 show a composition bias toward polar residues; sequence QTSNSTPAPQNQI. A helical; Anchor for type IV membrane protein membrane pass occupies residues 223–243; it reads SSSMGIFILVALLILVLGWFY. Residue R244 is a topological domain, lumenal.

Belongs to the VAMP-associated protein (VAP) (TC 9.B.17) family. In terms of assembly, interacts with OPI1. Also interacts with PBI1. Interacts with EPO1.

It localises to the endoplasmic reticulum membrane. It is found in the nucleus membrane. In terms of biological role, acts as an endoplasmic reticulum (ER) membrane anchor for cytoplasmic proteins via binding to the FFAT motif of targeted proteins. Regulates phospholipid biosynthesis by modulating the subcellular localization of the transcriptional repressor OPI1. Also contributes to the tethering of the ER to the plasma membrane. Allows interorganelle phosphatidylserine (PtdSer) transport via a process that involves the acceptor membrane complex PDR17-PDS2 that binds to PBI1 which in turn ligates to SCS2 and phosphatidic acid present in the donor membrane, forming a zone of apposition that facilitates PtdSer transfer. The polypeptide is Vesicle-associated membrane protein-associated protein SCS2 (Saccharomyces cerevisiae (strain ATCC 204508 / S288c) (Baker's yeast)).